The chain runs to 387 residues: Galactokinase (387 aa).

Substrate is bound at residue 32-35 (EHTD). ATP is bound by residues S66 and 123–129 (GAGLSSS). The Mg(2+) site is built by S129 and E161. Catalysis depends on D173, which acts as the Proton acceptor. Residue Y223 coordinates substrate.

Belongs to the GHMP kinase family. GalK subfamily.

It is found in the cytoplasm. It catalyses the reaction alpha-D-galactose + ATP = alpha-D-galactose 1-phosphate + ADP + H(+). It functions in the pathway carbohydrate metabolism; galactose metabolism. Its function is as follows. Catalyzes the transfer of the gamma-phosphate of ATP to D-galactose to form alpha-D-galactose-1-phosphate (Gal-1-P). The sequence is that of Galactokinase from Enterococcus faecalis (strain ATCC 700802 / V583).